Consider the following 273-residue polypeptide: Translation initiation factor 2 subunit alpha (273 aa).

Residues 12–83 (GEFVVATVKN…EKGHIDLSLK (72 aa)) form the S1 motif domain.

The protein belongs to the eIF-2-alpha family. As to quaternary structure, heterotrimer composed of an alpha, a beta and a gamma chain.

Its function is as follows. eIF-2 functions in the early steps of protein synthesis by forming a ternary complex with GTP and initiator tRNA. The chain is Translation initiation factor 2 subunit alpha from Thermococcus gammatolerans (strain DSM 15229 / JCM 11827 / EJ3).